The sequence spans 84 residues: Mu-conotoxin-like Cal 12.2d (84 aa).

A signal peptide spans 1-19 (MKLTCVLVVLLLVLPFGDL). Positions 20-42 (ITTSNTEDNKRGATPWQNSLKAR) are excised as a propeptide. The residue at position 72 (tryptophan 72) is a 6'-bromotryptophan. Proline 77 is subject to 4-hydroxyproline. A 6'-bromotryptophan modification is found at tryptophan 81.

It belongs to the conotoxin O1 superfamily. Contains 4 disulfide bonds. As to expression, expressed by the venom duct.

It localises to the secreted. Its function is as follows. Mu-conotoxins block voltage-gated sodium channels. This toxin reversibly blocks voltage-gated sodium channel in cephalopods, with no alteration in the voltage dependence of sodium conductance or on the kinetics of inactivation. The chain is Mu-conotoxin-like Cal 12.2d from Californiconus californicus (California cone).